The chain runs to 160 residues: Cytochrome b6-f complex subunit 4 (160 aa).

3 helical membrane passes run 36-56, 95-115, and 131-151; these read LLYI…GLAV, LLGV…PFLE, and TVFL…ALPI.

It belongs to the cytochrome b family. PetD subfamily. In terms of assembly, the 4 large subunits of the cytochrome b6-f complex are cytochrome b6, subunit IV (17 kDa polypeptide, petD), cytochrome f and the Rieske protein, while the 4 small subunits are petG, petL, petM and petN. The complex functions as a dimer.

The protein localises to the plastid. It is found in the chloroplast thylakoid membrane. Its function is as follows. Component of the cytochrome b6-f complex, which mediates electron transfer between photosystem II (PSII) and photosystem I (PSI), cyclic electron flow around PSI, and state transitions. The chain is Cytochrome b6-f complex subunit 4 from Physcomitrium patens (Spreading-leaved earth moss).